The chain runs to 152 residues: SsrA-binding protein (152 aa).

The protein belongs to the SmpB family.

Its subcellular location is the cytoplasm. Required for rescue of stalled ribosomes mediated by trans-translation. Binds to transfer-messenger RNA (tmRNA), required for stable association of tmRNA with ribosomes. tmRNA and SmpB together mimic tRNA shape, replacing the anticodon stem-loop with SmpB. tmRNA is encoded by the ssrA gene; the 2 termini fold to resemble tRNA(Ala) and it encodes a 'tag peptide', a short internal open reading frame. During trans-translation Ala-aminoacylated tmRNA acts like a tRNA, entering the A-site of stalled ribosomes, displacing the stalled mRNA. The ribosome then switches to translate the ORF on the tmRNA; the nascent peptide is terminated with the 'tag peptide' encoded by the tmRNA and targeted for degradation. The ribosome is freed to recommence translation, which seems to be the essential function of trans-translation. This chain is SsrA-binding protein, found in Sulfurihydrogenibium sp. (strain YO3AOP1).